Here is a 377-residue protein sequence, read N- to C-terminus: Dehydrogenase/reductase SDR family member 13 (377 aa).

A signal peptide spans Met-1–Ala-25. 2 residues coordinate NAD(+): Ser-46 and Ile-48. A substrate-binding site is contributed by Ser-170. Residues Tyr-197, Lys-201, and Ser-232 each contribute to the NAD(+) site. Tyr-197 (proton acceptor) is an active-site residue. The disordered stretch occupies residues Leu-310–Thr-363. Over residues Glu-317–Pro-327 the composition is skewed to acidic residues. The span at Glu-328 to Ser-337 shows a compositional bias: low complexity. The span at Ser-352 to Thr-363 shows a compositional bias: polar residues.

This sequence belongs to the short-chain dehydrogenases/reductases (SDR) family.

The protein resides in the secreted. In terms of biological role, putative oxidoreductase. This Bos taurus (Bovine) protein is Dehydrogenase/reductase SDR family member 13 (DHRS13).